The chain runs to 152 residues: MQLTELIETTVTGLGYELVDLERTGRGMLCVYIDQPAGISLEDCEKVTRQLQHVLTVENIDYERLEVSSPGLDRPLKKLADFERFAGSEVSVTLKKPLDGRKTYRGILHAPNGETIGLEFERKKGEAAMLDFTLADIDKARLIPQVDFRSRK.

Belongs to the RimP family.

The protein resides in the cytoplasm. Required for maturation of 30S ribosomal subunits. In Burkholderia multivorans (strain ATCC 17616 / 249), this protein is Ribosome maturation factor RimP.